The primary structure comprises 570 residues: Protein B602L (570 aa).

Repeat copies occupy residues 161 to 164, 165 to 168, 169 to 172, 173 to 176, 177 to 180, 181 to 184, 185 to 188, 189 to 192, 193 to 196, 197 to 200, 201 to 204, 205 to 208, 209 to 212, 213 to 216, 217 to 220, 221 to 224, 225 to 228, 229 to 232, 233 to 236, and 237 to 240. The tract at residues 161–240 is 20 X 4 AA tandem repeats of [CNS]-[ATV]-[DNS]-T; that stretch reads CADTNASTSA…STCASTCANT (80 aa).

It belongs to the asfivirus B602L family.

It localises to the host cytoplasm. Plays an essential role in the assembly of the icosahedral capsid of the virus. Allows the assembly of 3 molecules of hexon protein p72 and formation of a thermostable trimer. This African swine fever virus (isolate Tick/South Africa/Pretoriuskop Pr4/1996) (ASFV) protein is Protein B602L.